Here is a 245-residue protein sequence, read N- to C-terminus: Transcription factor FUP7 (245 aa).

Residues 10–37 constitute a DNA-binding region (zn(2)-C6 fungal-type); the sequence is CKTCRSRKQKCDGIRPACSRCRSLGLQC. The interval 162 to 216 is disordered; it reads ESSSGNADYQHEDEVQSPAGAGDDMAVGDPYRDDSVDQDSIGQPPQRTESVGNMQ. Residues 199-214 are compositionally biased toward polar residues; that stretch reads QDSIGQPPQRTESVGN.

It is found in the nucleus. In terms of biological role, transcription factor; part of the gene cluster that mediates the biosynthesis of the mycotoxin fusaproliferin (FUP) that belongs to the class of bicyclic sesterterpenoids. The protein is Transcription factor FUP7 of Fusarium proliferatum (strain ET1) (Orchid endophyte fungus).